The chain runs to 60 residues: Cytotoxin 2 (60 aa).

4 cysteine pairs are disulfide-bonded: Cys3–Cys21, Cys14–Cys38, Cys42–Cys53, and Cys54–Cys59.

This sequence belongs to the three-finger toxin family. Short-chain subfamily. Type IA cytotoxin sub-subfamily. Monomer in solution; Homodimer and oligomer in the presence of negatively charged lipids forming a pore with a size ranging between 20 and 30 Angstroms. In terms of tissue distribution, expressed by the venom gland.

It localises to the secreted. Its subcellular location is the target cell membrane. In terms of biological role, shows cytolytic activity on many different cells by forming pore in lipid membranes. In vivo, increases heart rate or kills the animal by cardiac arrest. In addition, it binds to heparin with high affinity, interacts with Kv channel-interacting protein 1 (KCNIP1) in a calcium-independent manner, and binds to integrin alpha-V/beta-3 (ITGAV/ITGB3) with moderate affinity. This is Cytotoxin 2 from Naja annulifera (Banded Egyptian cobra).